Here is a 172-residue protein sequence, read N- to C-terminus: Small ribosomal subunit protein uS5 (172 aa).

The 64-residue stretch at 16-79 folds into the S5 DRBM domain; it reads LKEKLVHINR…EDGKKNVIKV (64 aa).

This sequence belongs to the universal ribosomal protein uS5 family. In terms of assembly, part of the 30S ribosomal subunit. Contacts proteins S4 and S8.

Functionally, with S4 and S12 plays an important role in translational accuracy. In terms of biological role, located at the back of the 30S subunit body where it stabilizes the conformation of the head with respect to the body. The polypeptide is Small ribosomal subunit protein uS5 (Pelodictyon phaeoclathratiforme (strain DSM 5477 / BU-1)).